Reading from the N-terminus, the 316-residue chain is ATP synthase gamma chain (316 aa).

Belongs to the ATPase gamma chain family. In terms of assembly, F-type ATPases have 2 components, CF(1) - the catalytic core - and CF(0) - the membrane proton channel. CF(1) has five subunits: alpha(3), beta(3), gamma(1), delta(1), epsilon(1). CF(0) has three main subunits: a, b and c.

The protein localises to the cellular thylakoid membrane. In terms of biological role, produces ATP from ADP in the presence of a proton gradient across the membrane. The gamma chain is believed to be important in regulating ATPase activity and the flow of protons through the CF(0) complex. The sequence is that of ATP synthase gamma chain from Prochlorococcus marinus (strain MIT 9211).